Reading from the N-terminus, the 208-residue chain is Sec-independent protein translocase protein TatB (208 aa).

A helical transmembrane segment spans residues 1-21; that stretch reads MFDIGVGELTLIAVVALVVLG. Residues 178–189 show a composition bias toward low complexity; the sequence is APEPVAVAPVDA. The segment at 178 to 208 is disordered; sequence APEPVAVAPVDAGTPAAWTPSAPAKLQEKQP.

The protein belongs to the TatB family. The Tat system comprises two distinct complexes: a TatABC complex, containing multiple copies of TatA, TatB and TatC subunits, and a separate TatA complex, containing only TatA subunits. Substrates initially bind to the TatABC complex, which probably triggers association of the separate TatA complex to form the active translocon.

The protein localises to the cell inner membrane. In terms of biological role, part of the twin-arginine translocation (Tat) system that transports large folded proteins containing a characteristic twin-arginine motif in their signal peptide across membranes. Together with TatC, TatB is part of a receptor directly interacting with Tat signal peptides. TatB may form an oligomeric binding site that transiently accommodates folded Tat precursor proteins before their translocation. The polypeptide is Sec-independent protein translocase protein TatB (Xanthomonas euvesicatoria pv. vesicatoria (strain 85-10) (Xanthomonas campestris pv. vesicatoria)).